The primary structure comprises 529 residues: Bifunctional purine biosynthesis protein PurH (529 aa).

The MGS-like domain maps to 1-148 (MQQRRPVRRA…KNHKDVAIVV (148 aa)).

The protein belongs to the PurH family.

The enzyme catalyses (6R)-10-formyltetrahydrofolate + 5-amino-1-(5-phospho-beta-D-ribosyl)imidazole-4-carboxamide = 5-formamido-1-(5-phospho-D-ribosyl)imidazole-4-carboxamide + (6S)-5,6,7,8-tetrahydrofolate. It carries out the reaction IMP + H2O = 5-formamido-1-(5-phospho-D-ribosyl)imidazole-4-carboxamide. Its pathway is purine metabolism; IMP biosynthesis via de novo pathway; 5-formamido-1-(5-phospho-D-ribosyl)imidazole-4-carboxamide from 5-amino-1-(5-phospho-D-ribosyl)imidazole-4-carboxamide (10-formyl THF route): step 1/1. The protein operates within purine metabolism; IMP biosynthesis via de novo pathway; IMP from 5-formamido-1-(5-phospho-D-ribosyl)imidazole-4-carboxamide: step 1/1. The protein is Bifunctional purine biosynthesis protein PurH of Salmonella enteritidis PT4 (strain P125109).